The sequence spans 227 residues: UPF0758 protein lpl2409 (227 aa).

Residues 102–225 form the MPN domain; sequence RLSNTQQTYA…YSIFAENKWA (124 aa). The Zn(2+) site is built by histidine 173, histidine 175, and aspartate 186. Positions 173–186 match the JAMM motif motif; it reads HNHPSGLSDASQQD.

The protein belongs to the UPF0758 family.

The polypeptide is UPF0758 protein lpl2409 (Legionella pneumophila (strain Lens)).